The chain runs to 87 residues: Small ribosomal subunit protein uS17 (87 aa).

It belongs to the universal ribosomal protein uS17 family. As to quaternary structure, part of the 30S ribosomal subunit.

One of the primary rRNA binding proteins, it binds specifically to the 5'-end of 16S ribosomal RNA. The sequence is that of Small ribosomal subunit protein uS17 from Geobacillus thermodenitrificans (strain NG80-2).